The primary structure comprises 568 residues: Urease subunit alpha (568 aa).

The region spanning 131–568 (GGMDAHIHFI…LPLAQRYFLY (438 aa)) is the Urease domain. Ni(2+)-binding residues include His136, His138, and Lys219. Lys219 carries the post-translational modification N6-carboxylysine. His221 lines the substrate pocket. Ni(2+) contacts are provided by His248 and His274. The active-site Proton donor is His322. Asp362 is a binding site for Ni(2+).

Belongs to the metallo-dependent hydrolases superfamily. Urease alpha subunit family. As to quaternary structure, heterotrimer of UreA (gamma), UreB (beta) and UreC (alpha) subunits. Three heterotrimers associate to form the active enzyme. Ni cation serves as cofactor. Post-translationally, carboxylation allows a single lysine to coordinate two nickel ions.

It localises to the cytoplasm. It catalyses the reaction urea + 2 H2O + H(+) = hydrogencarbonate + 2 NH4(+). It functions in the pathway nitrogen metabolism; urea degradation; CO(2) and NH(3) from urea (urease route): step 1/1. The polypeptide is Urease subunit alpha (Cereibacter sphaeroides (strain ATCC 17023 / DSM 158 / JCM 6121 / CCUG 31486 / LMG 2827 / NBRC 12203 / NCIMB 8253 / ATH 2.4.1.) (Rhodobacter sphaeroides)).